The following is a 293-amino-acid chain: 4-hydroxy-tetrahydrodipicolinate synthase (293 aa).

Pyruvate is bound at residue Thr-45. The active-site Proton donor/acceptor is the Tyr-133. The active-site Schiff-base intermediate with substrate is the Lys-162. Ile-204 lines the pyruvate pocket.

Belongs to the DapA family. Homotetramer; dimer of dimers.

It localises to the cytoplasm. The catalysed reaction is L-aspartate 4-semialdehyde + pyruvate = (2S,4S)-4-hydroxy-2,3,4,5-tetrahydrodipicolinate + H2O + H(+). Its pathway is amino-acid biosynthesis; L-lysine biosynthesis via DAP pathway; (S)-tetrahydrodipicolinate from L-aspartate: step 3/4. Catalyzes the condensation of (S)-aspartate-beta-semialdehyde [(S)-ASA] and pyruvate to 4-hydroxy-tetrahydrodipicolinate (HTPA). The polypeptide is 4-hydroxy-tetrahydrodipicolinate synthase (Mesorhizobium japonicum (strain LMG 29417 / CECT 9101 / MAFF 303099) (Mesorhizobium loti (strain MAFF 303099))).